Consider the following 147-residue polypeptide: Small ribosomal subunit protein bS6 (147 aa).

Basic and acidic residues predominate over residues 97 to 141; sequence EEGPSAMMRKADRDRERDDRGGGFRGDREGGFRGDRGPRRPREEA. The interval 97–147 is disordered; sequence EEGPSAMMRKADRDRERDDRGGGFRGDREGGFRGDRGPRRPREEAPAVVEE.

This sequence belongs to the bacterial ribosomal protein bS6 family.

Binds together with bS18 to 16S ribosomal RNA. This chain is Small ribosomal subunit protein bS6, found in Nitrobacter hamburgensis (strain DSM 10229 / NCIMB 13809 / X14).